A 323-amino-acid polypeptide reads, in one-letter code: GMP reductase (323 aa).

Catalysis depends on C174, which acts as the Thioimidate intermediate. NADP(+) is bound at residue 203 to 226; that stretch reads IIADGGIRHNGDIAKSVRFGASMV.

The protein belongs to the IMPDH/GMPR family. GuaC type 2 subfamily.

The enzyme catalyses IMP + NH4(+) + NADP(+) = GMP + NADPH + 2 H(+). In terms of biological role, catalyzes the irreversible NADPH-dependent deamination of GMP to IMP. It functions in the conversion of nucleobase, nucleoside and nucleotide derivatives of G to A nucleotides, and in maintaining the intracellular balance of A and G nucleotides. In Oenococcus oeni (strain ATCC BAA-331 / PSU-1), this protein is GMP reductase.